The sequence spans 120 residues: PYEKIGAELVKEVAKKTDDVAGDGTTTATVLAQALVREGLRNVAAGANPLGLKRGIEKAVEAVTQSLLKSAKEVETKEQISATAAISAGDTQIGELIAEAMDKVGNEGVITVEESNTFGL.

23–27 contacts ATP; it reads DGTTT.

Belongs to the chaperonin (HSP60) family. In terms of assembly, forms a cylinder of 14 subunits composed of two heptameric rings stacked back-to-back. Interacts with the co-chaperonin GroES.

The protein resides in the cytoplasm. It carries out the reaction ATP + H2O + a folded polypeptide = ADP + phosphate + an unfolded polypeptide.. Its function is as follows. Together with its co-chaperonin GroES, plays an essential role in assisting protein folding. The GroEL-GroES system forms a nano-cage that allows encapsulation of the non-native substrate proteins and provides a physical environment optimized to promote and accelerate protein folding. The protein is Chaperonin GroEL of Mycolicibacterium vaccae (Mycobacterium vaccae).